Reading from the N-terminus, the 59-residue chain is uncharacterized protein (59 aa).

The first 17 residues, 1 to 17, serve as a signal peptide directing secretion; it reads MIASIWYAELGCASAIA.

This is an uncharacterized protein from Rickettsia prowazekii (strain Madrid E).